We begin with the raw amino-acid sequence, 20 residues long: Non-specific lipid-transfer protein (20 aa).

It belongs to the plant LTP family.

In terms of biological role, plant non-specific lipid-transfer proteins transfer phospholipids as well as galactolipids across membranes. May play a role in wax or cutin deposition in the cell walls of expanding epidermal cells and certain secretory tissues. This Citrus sinensis (Sweet orange) protein is Non-specific lipid-transfer protein.